Consider the following 95-residue polypeptide: F(1)-ATPase inhibitor IF(1), mitochondrial (95 aa).

A mitochondrion-targeting transit peptide spans 1-25; the sequence is MLRTTVSKLARPTVSRAFATTSRAL. Disordered regions lie at residues 20-48 and 76-95; these read TTSRALAGETGAPPKTGGPGDAFQRREKA and LKTLSDHIDEITREQGGERN.

It belongs to the ATPase inhibitor family. Associates with the mitochondrial small ribosomal subunit (mt-SSU). IF(1) coiled-coil forms a helical bundle with the C-terminal extension of uS17m and also binds to mS27 in the mtSSU tail. Since the C-terminal extension of uS17m stabilizing the IF(1) on the mt-SSU is specific to N.crassa, IF(1) binding might also be specific.

Its subcellular location is the mitochondrion. In terms of biological role, endogenous F(1)F(0)-ATPase inhibitor limiting ATP depletion when the mitochondrial membrane potential falls below a threshold and the F(1)F(0)-ATP synthase starts hydrolyzing ATP to pump protons out of the mitochondrial matrix. Required to avoid the consumption of cellular ATP when the F(1)F(0)-ATP synthase enzyme acts as an ATP hydrolase. Functions through inserting its N-terminal part into the catalytically active F1-ATPase, thereby blocking its rotational movement and subsequently the ATP hydrolase activity. In Neurospora crassa (strain ATCC 24698 / 74-OR23-1A / CBS 708.71 / DSM 1257 / FGSC 987), this protein is F(1)-ATPase inhibitor IF(1), mitochondrial (inh1).